A 958-amino-acid polypeptide reads, in one-letter code: Translation initiation factor IF-2 (958 aa).

Low complexity predominate over residues 50–67 (FKPAAAPKVEAKPAAPKV). Disordered regions lie at residues 50-224 (FKPA…RIDF) and 288-374 (EVVP…HELP). 3 stretches are compositionally biased toward basic and acidic residues: residues 68 to 89 (SAEKKAEKSEPAKPAVAKEEAK), 96 to 118 (SAEKKAEKSEPVKPAVAKEEAKP), and 138 to 153 (FKAEREARAKEQAERR). Residues 157–169 (KGNNRDQQQNGNR) are compositionally biased toward low complexity. Composition is skewed to basic and acidic residues over residues 185–195 (RDNRRFNDQAK) and 290–323 (VPEKKEPAVDTRRKKQARPDKNRDDYDHEEDGPR). Residues 337–346 (NQKNSNWNNN) show a composition bias toward low complexity. Positions 365 to 374 (VTERKFHELP) are enriched in basic and acidic residues. Residues 460-627 (ERPPVVTIMG…TVLLVAEIQE (168 aa)) enclose the tr-type G domain. Positions 469–476 (GHVDHGKT) are G1. 469 to 476 (GHVDHGKT) serves as a coordination point for GTP. The interval 494–498 (GITQH) is G2. Residues 515-518 (DTPG) form a G3 region. Residues 515 to 519 (DTPGH) and 569 to 572 (NKID) each bind GTP. The segment at 569-572 (NKID) is G4. Residues 605–607 (SAK) form a G5 region.

It belongs to the TRAFAC class translation factor GTPase superfamily. Classic translation factor GTPase family. IF-2 subfamily.

The protein resides in the cytoplasm. Its function is as follows. One of the essential components for the initiation of protein synthesis. Protects formylmethionyl-tRNA from spontaneous hydrolysis and promotes its binding to the 30S ribosomal subunits. Also involved in the hydrolysis of GTP during the formation of the 70S ribosomal complex. This chain is Translation initiation factor IF-2, found in Streptococcus pneumoniae serotype 4 (strain ATCC BAA-334 / TIGR4).